A 242-amino-acid polypeptide reads, in one-letter code: 1-(5-phosphoribosyl)-5-[(5-phosphoribosylamino)methylideneamino] imidazole-4-carboxamide isomerase (242 aa).

Asp-8 acts as the Proton acceptor in catalysis. The active-site Proton donor is Asp-129.

This sequence belongs to the HisA/HisF family.

It localises to the cytoplasm. The enzyme catalyses 1-(5-phospho-beta-D-ribosyl)-5-[(5-phospho-beta-D-ribosylamino)methylideneamino]imidazole-4-carboxamide = 5-[(5-phospho-1-deoxy-D-ribulos-1-ylimino)methylamino]-1-(5-phospho-beta-D-ribosyl)imidazole-4-carboxamide. It participates in amino-acid biosynthesis; L-histidine biosynthesis; L-histidine from 5-phospho-alpha-D-ribose 1-diphosphate: step 4/9. The sequence is that of 1-(5-phosphoribosyl)-5-[(5-phosphoribosylamino)methylideneamino] imidazole-4-carboxamide isomerase from Clostridium botulinum (strain Okra / Type B1).